The sequence spans 1499 residues: MSLASDKKDADVASTTTTAQDDDNLSTYHGFDHHVQDQVRQLARTLTQQSSLHQKKEHTLPEEGINPIFTNTEADDYNPRLDPTSDEFSSAEWVQNMSNISNSDPDYYKPYSLGCYWKDLVATGESADIEYQANFLNGPYKGLKTVYNTVVPSTASSKDKNFKILKSMEGAVNPGELLVVLGRPGSGCTTLLKSISSNTHGFNIAKESTISYSGMTPNDIRKHFRGEVVYNAEADIHLPHLTVYQTLLTVARLKTPQNRLKGIDRETYARHLTEVAMATFGLSHTRNTKVGNDLVRGVSGGERKRVSIAEVSICGSKFQCWDNATRGLDSATALEFIRALKVQASISNAAATVAIYQCSQDAYDLFDKVCVLYDGYQIYFGPAGKAKEYFQKMGYVSPERQTTADFLTAVTSPSERIINQDYINRGIFVPQTPKEMWEYWRASEDHADLIKEIDSKLSDNYDANLAEIKDAHVARQSKRARPSSPYTVSYGMQIKYLLIRNFWRIKQSSGVTLFMVIGNSSMAFILGSMFYKVMKHNTTSTFYFRGAAMFFAVLFNAFSSLLEIFSLFEARPITEKHRTYSLYHPSADAFASILSEVPAKLITAVCFNIIYYFLVNFRRNGGVFFFYFLINIVAVFAMSHLFRCVGSVSKTLSAAMVPASMLLLGLSMYSGFAIPRTKILGWSKWIWYINPLAYLFESLMINEFHDRKFPCSQYIPSGSVYNNVPADSRICSSVGAIRGNDYVLGDDFLRESYSYLHKHKWRGFGIGLAYVIFFLVLYLILCEYNEGAKQKGEILVFPQNIVRRMKKERKLKNVSSDNDVEIGDVSDISDKKILADSSDESEESGANIGLSQSEAIFHWRNLCYDVQIKKETRRILNNVDGWVKPGTLTALMGASGAGKTTLLDCLAERVTMGVITGEVSVDGKQRDDSFARSIGYCQQQDLHLKTSTVRESLRFSAYLRQPADVSIEEKNQYVEDVIKILEMEQYADAVVGVPGEGLNVEQRKRLTIGVELAAKPKLLVFLDEPTSGLDSQTAWSICQLMKKLANHGQAILCTIHQPSAILMQEFDRLLFLQRGGKTVYFGDLGDGCKTMIDYFESHGSHKCPPDANPAEWMLEVVGAAPGSHANQDYHEVWRNSDEYQKVQEELEWMSNELPKKNTNNSETVHKEFATGVLYQCKLVSLRLFQQYWRSPDYLWSKFFLTIFNNIFIGFTFFKADRSLQGLQNQMLAVFMFTVIFNPLLQQYLPSFVQQRDLYEARERPSRTFSWKAFIVSQILVEIPWNILAGTVAFVIYYYAIGFYSNASVAHQLHERGALFWLFSCAFYVYIGSLALFCISFNQVAEAAANMASLMFTLSLSFCGVLVTPNGMPRFWIFMYRVSPLTYLIDGMLSTGVANVAIKCSNYELLRFSPAANLTCGEYLGPYLQTVKTGYIVDPSATDTCELCPYSHTNDFLSSVSSKYSRRWRNWGIFICYIAFNYIAGIFLYWLARVPKKSGKLAKK.

A compositionally biased stretch (basic and acidic residues) spans 1–11 (MSLASDKKDAD). Residues 1–29 (MSLASDKKDADVASTTTTAQDDDNLSTYH) form a disordered region. Residues N24, N96, and N99 are each glycosylated (N-linked (GlcNAc...) asparagine). In terms of domain architecture, ABC transporter 1 spans 146–399 (VYNTVVPSTA…FQKMGYVSPE (254 aa)). S307 carries the post-translational modification Phosphoserine. Residue N323 is glycosylated (N-linked (GlcNAc...) asparagine). S484 is subject to Phosphoserine. Residues 510–530 (GVTLFMVIGNSSMAFILGSMF) form a helical membrane-spanning segment. A glycan (N-linked (GlcNAc...) asparagine) is linked at N537. 5 consecutive transmembrane segments (helical) span residues 548–568 (AMFF…FSLF), 597–617 (VPAK…LVNF), 622–642 (GVFF…SHLF), 654–674 (AAMV…GFAI), and 763–783 (GFGI…ILCE). An N-linked (GlcNAc...) asparagine glycan is attached at N813. The ABC transporter 2 domain occupies 857 to 1099 (FHWRNLCYDV…TMIDYFESHG (243 aa)). 893–900 (GASGAGKT) is a binding site for ATP. N-linked (GlcNAc...) asparagine glycosylation is present at N1159. The next 3 helical transmembrane spans lie at 1193–1213 (YLWS…FTFF), 1228–1248 (AVFM…PSFV), and 1278–1298 (IPWN…AIGF). N-linked (GlcNAc...) asparagine glycosylation is present at N1301. 2 helical membrane-spanning segments follow: residues 1314-1334 (LFWL…LFCI) and 1342-1362 (AAAN…GVLV). A glycan (N-linked (GlcNAc...) asparagine) is linked at N1412. The helical transmembrane segment at 1466–1486 (WGIFICYIAFNYIAGIFLYWL) threads the bilayer.

It belongs to the ABC transporter superfamily. In terms of processing, phosphorylated at Ser-307 and Ser-484. Ser-307 and Ser-484 are dephosphorylated on glucose depletion and independently rephosphorylated during glucose exposure or under stress.

It is found in the cell membrane. With respect to regulation, inhibited by clorgyline. Inhibited by RC21v3, a 4-methoxy-2,3,6-trimethylbenzenesulphonyl derivative of the D-octapeptide D-FFKWQRRR, via the interaction with the ectodomain. FK506, enniatin, milbemycin alpha-11, and milbemycin beta-9 also inhibit CDR1 activity. Inhibited by milbemycin A3/A4 oxim derivatives. Pleiotropic ABC efflux transporter that transports and confers resistance to structurally and functionally unrelated compounds including rhodamine 6G, Nile red, caspofungin, cycloheximide, or azoles such as fluconazole, itraconazole, ketoconazole, posaconazole, voriconazole, and isavuconazole. Chlorbromuron, itraconazole, yohimbine, ketoconazole, miconazole, clotrimazole, DE-11, tamoxifen, quinidine, verapamil can compete for rhodamine 6G's binding site(s) while compounds such as propanil, chloramphenicol, benomyl, voriconazole, tritylimidazole, ketoconazole, miconazole, tamoxifen, gefitinib shared binding site(s) with fluconazole. Nile red mediated efflux appears to be relatively more specific since only five compounds such as ZW3-12, rhodamine 123, miconazole, clotrimazole, and itraconazole can inhibit its accumulation. Does not use as substrates 4-nitroquinoline 1-oxide (4-NQO) and disulfiram. Does not play a role in the azole resistance in mature biofilms. The protein is Pleiotropic ABC efflux transporter of multiple drugs CDR1 of Candida glabrata (strain ATCC 2001 / BCRC 20586 / JCM 3761 / NBRC 0622 / NRRL Y-65 / CBS 138) (Yeast).